We begin with the raw amino-acid sequence, 237 residues long: MNSQTQMKQIVAEAAIEEVKSDMILGLGSGSTAVLMIKSLADAIRSGKLQNIKGVATSFQSEVLALELDIPLIDLASVSQIDLAIDGADEVDPGFQLIKGGGACHVREKLVASKANQLLIVVDETKLVRKLNQSFPLPVEVLPNAWKQVQEVISEMNGISTLRMATKKAGPVVTDQGNLILDVLFNDGIKNPKDIEKSINNIPGVLENGLFIDLTDKVLVGKIENNIPVAYSPAKVG.

Residues 29–32 (SGST), 86–89 (DGAD), and 99–102 (KGGG) each bind substrate. E108 functions as the Proton acceptor in the catalytic mechanism. Residue K126 participates in substrate binding.

Belongs to the ribose 5-phosphate isomerase family. In terms of assembly, homodimer.

The enzyme catalyses aldehydo-D-ribose 5-phosphate = D-ribulose 5-phosphate. It functions in the pathway carbohydrate degradation; pentose phosphate pathway; D-ribose 5-phosphate from D-ribulose 5-phosphate (non-oxidative stage): step 1/1. Functionally, catalyzes the reversible conversion of ribose-5-phosphate to ribulose 5-phosphate. This Prochlorococcus marinus (strain MIT 9312) protein is Ribose-5-phosphate isomerase A.